The sequence spans 440 residues: 6-phospho-alpha-glucosidase (440 aa).

Residue phenylalanine 4 to aspartate 70 coordinates NAD(+). Positions 93 and 147 each coordinate substrate. Residue cysteine 169 coordinates Mn(2+). Aspartate 170 serves as the catalytic Proton donor. Histidine 200 serves as a coordination point for Mn(2+). Tyrosine 263 functions as the Proton acceptor in the catalytic mechanism. Arginine 283 lines the substrate pocket.

The protein belongs to the glycosyl hydrolase 4 family. In terms of assembly, homodimer. The cofactor is NAD(+). Requires Mn(2+) as cofactor.

It participates in glycan degradation; palatinose degradation. In vitro, readily hydrolyzes p-nitrophenyl-alpha-D-glucopyranoside 6-phosphate (pNPalphaG6P), a chromogenic analog of the phosphorylated isomers of sucrose. In vivo, is probably involved in the degradation of the 6-phosphate derivatives of the sucrose isomers trehalulose, turanose, maltulose and palatinose, catalyzing their hydrolysis into glucose 6-phosphate (G6P) and fructose, which allows the bacterium to use these sugars as energy sources for growth. Is not able to hydrolyze the C2 or C4 chromogenic stereomers (i.e. pNPalpha-mannopyranoside-6P and pNPalpha-galactopyranoside-6P, respectively). In Leptotrichia buccalis (strain ATCC 14201 / DSM 1135 / JCM 12969 / NCTC 10249 / C-1013-b), this protein is 6-phospho-alpha-glucosidase (pagL).